The chain runs to 126 residues: Adenosine 5'-monophosphoramidase HINT1 (126 aa).

Ala2 carries the post-translational modification N-acetylalanine. One can recognise an HIT domain in the interval 18-126 (IFGKIIRKEI…GGRQMNWPPG (109 aa)). Lys21 and Lys30 each carry N6-acetyllysine. Residue 43 to 44 (DI) coordinates AMP. Ser45 and Ser72 each carry phosphoserine. AMP contacts are provided by residues Asn99, 105–107 (GQS), and 112–114 (HLH). A Histidine triad motif motif is present at residues 110 to 114 (HVHLH). His112 acts as the Tele-AMP-histidine intermediate in catalysis.

This sequence belongs to the HINT family. Homodimer. Interacts with CDK7. Interacts with RUVBL1 and RUVBL2 and is associated with the LEF1/TCF1-CTNNB1 complex and with a KAT5 histone acetyltransferase complex. Identified in a complex with MITF and CTNNB1. Interacts with CDC34 and RBX1, and is part of a SCF (SKP2-CUL1-F-box protein) E3 ubiquitin-protein ligase complex. Interacts with SUMO1, SUMO2 and RGS17. Interacts with the Ten-1 ICD form of TENM1. Interacts with CALM1; interaction increases in the presence of calcium ions. Widely expressed.

The protein localises to the cytoplasm. The protein resides in the nucleus. The catalysed reaction is adenosine 5'-phosphoramidate + H2O = AMP + NH4(+). Exhibits adenosine 5'-monophosphoramidase activity, hydrolyzing purine nucleotide phosphoramidates with a single phosphate group such as adenosine 5'monophosphoramidate (AMP-NH2) to yield AMP and NH2. Hydrolyzes adenosine 5'monophosphomorpholidate (AMP-morpholidate) and guanosine 5'monophosphomorpholidate (GMP-morpholidate). Hydrolyzes lysyl-AMP (AMP-N-epsilon-(N-alpha-acetyl lysine methyl ester)) generated by lysine tRNA ligase, as well as Met-AMP, His-AMP and Asp-AMP, lysyl-GMP (GMP-N-epsilon-(N-alpha-acetyl lysine methyl ester)) and AMP-N-alanine methyl ester. Can also convert adenosine 5'-O-phosphorothioate and guanosine 5'-O-phosphorothioate to the corresponding nucleoside 5'-O-phosphates with concomitant release of hydrogen sulfide. In addition, functions as a scaffolding protein that modulates transcriptional activation by the LEF1/TCF1-CTNNB1 complex and by the complex formed with MITF and CTNNB1. Modulates p53/TP53 levels and p53/TP53-mediated apoptosis. Modulates proteasomal degradation of target proteins by the SCF (SKP2-CUL1-F-box protein) E3 ubiquitin-protein ligase complex. Also exhibits SUMO-specific isopeptidase activity, deconjugating SUMO1 from RANGAP1 and RGS17. This chain is Adenosine 5'-monophosphoramidase HINT1 (HINT1), found in Bos taurus (Bovine).